A 723-amino-acid polypeptide reads, in one-letter code: Probable dipeptidyl-peptidase 5 (723 aa).

A signal peptide spans 1 to 19 (MAALRWLSAVVAVSTTVLA). N-linked (GlcNAc...) asparagine glycans are attached at residues Asn79, Asn97, Asn154, Asn255, Asn381, and Asn451. Ser561 acts as the Charge relay system in catalysis. An N-linked (GlcNAc...) asparagine glycan is attached at Asn608. Active-site charge relay system residues include Asp644 and His676.

It belongs to the peptidase S9C family.

Its subcellular location is the secreted. Extracellular dipeptidyl-peptidase which removes N-terminal dipeptides sequentially from polypeptides having unsubstituted N-termini. This is Probable dipeptidyl-peptidase 5 (dpp5) from Aspergillus terreus (strain NIH 2624 / FGSC A1156).